Here is a 274-residue protein sequence, read N- to C-terminus: Energy-coupling factor transporter ATP-binding protein EcfA (274 aa).

In terms of domain architecture, ABC transporter spans 2 to 235; it reads IRLENVSYNY…LSLRYLGLTP (234 aa). Residue 35–42 coordinates ATP; that stretch reads GKNGSGKS.

This sequence belongs to the ABC transporter superfamily. Energy-coupling factor EcfA family. Forms a stable energy-coupling factor (ECF) transporter complex composed of 2 membrane-embedded substrate-binding proteins (S component), 2 ATP-binding proteins (A component) and 2 transmembrane proteins (T component).

The protein resides in the cell membrane. Its function is as follows. ATP-binding (A) component of a common energy-coupling factor (ECF) ABC-transporter complex. Unlike classic ABC transporters this ECF transporter provides the energy necessary to transport a number of different substrates. This Methanosarcina acetivorans (strain ATCC 35395 / DSM 2834 / JCM 12185 / C2A) protein is Energy-coupling factor transporter ATP-binding protein EcfA.